We begin with the raw amino-acid sequence, 437 residues long: Aspartic proteinase nepenthesin-1 (437 aa).

A signal peptide spans 1–24; sequence MASSLYSFLLALSIVYIFVAPTHS. The propeptide at 25-78 is activation peptide; sequence TSRTALNHRHEAKVTGFQIMLEHVDSGKNLTKFQLLERAIERGSRRLQRLEAML. N-linked (GlcNAc...) asparagine glycans are attached at residues Asn-53 and Asn-98. A Peptidase A1 domain is found at 95 to 430; that stretch reads YLMNLSIGTP…DTGNSVVSFA (336 aa). The active site involves Asp-113. 6 disulfide bridges follow: Cys-123-Cys-126, Cys-129-Cys-203, Cys-150-Cys-168, Cys-155-Cys-163, Cys-240-Cys-434, and Cys-354-Cys-395. The N-linked (GlcNAc...) asparagine glycan is linked to Asn-131. Residues Asn-198, Asn-267, and Asn-307 are each glycosylated (N-linked (GlcNAc...) asparagine). Asp-315 is a catalytic residue. Asn-345 carries N-linked (GlcNAc...) asparagine glycosylation.

It belongs to the peptidase A1 family.

It is found in the secreted. The enzyme catalyses Similar to pepsin, but also cleaves on either side of Asp and at Lys-|-Arg.. With respect to regulation, inhibited by pepstatin and by diazoacetyl-D,L-norleucine methyl ester (DAN) in the presence of Cu(2+) ions. Its function is as follows. Extracellular proteinase found in the pitcher fluid of carnivorous plants. Digest prey for nitrogen uptake. This chain is Aspartic proteinase nepenthesin-1 (nep1), found in Nepenthes gracilis (Slender pitcher plant).